Reading from the N-terminus, the 381-residue chain is 1-deoxy-D-xylulose 5-phosphate reductoisomerase (381 aa).

Residues threonine 11, glycine 12, serine 13, isoleucine 14, lysine 36, asparagine 37, and asparagine 121 each coordinate NADPH. Lysine 122 provides a ligand contact to 1-deoxy-D-xylulose 5-phosphate. Glutamate 123 is a binding site for NADPH. Position 147 (aspartate 147) interacts with Mn(2+). Serine 148, glutamate 149, serine 173, and histidine 196 together coordinate 1-deoxy-D-xylulose 5-phosphate. Glutamate 149 lines the Mn(2+) pocket. Glycine 202 contacts NADPH. Residues serine 209, asparagine 214, lysine 215, and glutamate 218 each coordinate 1-deoxy-D-xylulose 5-phosphate. Glutamate 218 contacts Mn(2+).

The protein belongs to the DXR family. The cofactor is Mg(2+). Requires Mn(2+) as cofactor.

The catalysed reaction is 2-C-methyl-D-erythritol 4-phosphate + NADP(+) = 1-deoxy-D-xylulose 5-phosphate + NADPH + H(+). It functions in the pathway isoprenoid biosynthesis; isopentenyl diphosphate biosynthesis via DXP pathway; isopentenyl diphosphate from 1-deoxy-D-xylulose 5-phosphate: step 1/6. In terms of biological role, catalyzes the NADPH-dependent rearrangement and reduction of 1-deoxy-D-xylulose-5-phosphate (DXP) to 2-C-methyl-D-erythritol 4-phosphate (MEP). This chain is 1-deoxy-D-xylulose 5-phosphate reductoisomerase, found in Acetivibrio thermocellus (strain ATCC 27405 / DSM 1237 / JCM 9322 / NBRC 103400 / NCIMB 10682 / NRRL B-4536 / VPI 7372) (Clostridium thermocellum).